We begin with the raw amino-acid sequence, 457 residues long: MLLRAAWRRAAVAVTAAPGPKPAAPTRGLRLRVGDHAPQSAVPADTAAAPEAGPVLRPLYMDVQATTPLDPRVLDAMLPYLINYYGNPHSRTHAYGWESEAAMERARQQVASLIGADPREIIFTSGATESNNIAIKGVARFYRSRKKHLITTQTEHKCVLDSCRSLEAEGFQVTYLPVQKSGIIDLKELEAAIQPDTSLVSVMTVNNEIGVKQPIAEIGRICSSRKVYFHTDAAQAVGKIPLDVNDMKIDLMSISGHKIYGPKGVGAIYIRRRPRVRVEALQSGGGQERGMRSGTVPTPLVVGLGAACEVAQQEMEYDHKRISKLSERLIQNIMKSLPDVVMNGDPEHHYPGCINLSFAYVEGESLLMALKDVALSSGSACTSASLEPSYVLRAIGTDEDLAHSSIRFGVGRFTTEEEVDYTVEKCIQHVKRLREMSPLWEMVQDGIDLKSIKWTQH.

Residues Ala127, Thr128, Gln235, Ser255, and His257 each contribute to the pyridoxal 5'-phosphate site. At Lys258 the chain carries N6-(pyridoxal phosphate)lysine. Residue Thr295 coordinates pyridoxal 5'-phosphate. Cys381 (cysteine persulfide intermediate) is an active-site residue. Residue Cys381 participates in [2Fe-2S] cluster binding. Cys381 is a Zn(2+) binding site. At Cys381 the chain carries Cysteine persulfide.

Belongs to the class-V pyridoxal-phosphate-dependent aminotransferase family. NifS/IscS subfamily. As to quaternary structure, homodimer. Component of the mitochondrial core iron-sulfur cluster (ISC) complex composed of NFS1, LYRM4, NDUFAB1, ISCU, FXN, and FDX2; this complex is a heterohexamer containing two copies of each monomer. Component of cyteine desulfurase complex composed of NFS1, LYRM4 and NDUFAB1; this complex contributes to the activation of cysteine desulfurase activity and NFS1 stabilization. Interacts (homodimer form) with ISCU (D-state); each monomer interacts with the C-terminal regions of each NFS1 monomer. Interacts with HSPA9. Interacts (via homodimer form) with FDX2. Interacts (via homodimer form) with FXN. Interacts with LYRM4. Component of a complex composed of FXN, NFS1, LYRM4 and ISCU. In terms of assembly, monomer. Homodimer. Oligomer. Interacts with ISCU. Component of the cysteine desulfurase complex composed of NFS1 and LYRM4; this complex contributes to the activation of cysteine desulfurase activity. Interacts with MOCS3. The cofactor is pyridoxal 5'-phosphate. Post-translationally, N-gluconoylated. In terms of processing, cysteine persulfide intermediate is reduced by thiol-containing molecules like glutathione and L-cysteine. Persulfide reduction is a rate-limiting step of cysteine desulfurase catalytic cycle.

It localises to the mitochondrion. Its subcellular location is the cytoplasm. The protein localises to the nucleus. It is found in the cytoskeleton. The protein resides in the microtubule organizing center. It localises to the centrosome. The catalysed reaction is (sulfur carrier)-H + L-cysteine = (sulfur carrier)-SH + L-alanine. The enzyme catalyses L-cysteinyl-[cysteine desulfurase] + L-cysteine = S-sulfanyl-L-cysteinyl-[cysteine desulfurase] + L-alanine. Active only in complex with LYRM4. In terms of biological role, cysteine desulfurase, of the core iron-sulfur cluster (ISC) assembly complex, that catalyzes the desulfuration of L-cysteine to L-alanine, as component of the cysteine desulfurase complex leading to the formation of a cysteine persulfide intermediate at the active site cysteine residue and participates in the [2Fe-2S] clusters assembly on the scaffolding protein ISCU. The persulfide is then transferred on the flexible Cys loop from the catalytic site of NFS1 to the surface of NFS1. After the NFS1-linked persulfide sulfur is transferred to one of the conserved Cys residues of the scaffold, a reaction assisted by FXN. The core iron-sulfur cluster (ISC) assembly complex is involved in the de novo synthesis of a [2Fe-2S] cluster, the first step of the mitochondrial iron-sulfur protein biogenesis. This process is initiated by the cysteine desulfurase complex (NFS1:LYRM4:NDUFAB1) that produces persulfide which is delivered on the scaffold protein ISCU in a FXN-dependent manner. Then this complex is stabilized by FDX2 which provides reducing equivalents to accomplish the [2Fe-2S] cluster assembly. Finally, the [2Fe-2S] cluster is transferred from ISCU to chaperone proteins, including HSCB, HSPA9 and GLRX5. Functionally, may catalyze the desulfuration of L-cysteine to L-alanine as component of the cysteine desulfurase complex (NFS1:LYRM4), leading to the formation of a cysteine persulfide intermediate. Acts as a sulfur donor for MOCS3 by transferring the sulfur of the cysteine persulfide intermediate on MOCS3. In Pongo abelii (Sumatran orangutan), this protein is Cysteine desulfurase.